The following is a 398-amino-acid chain: Histidinol-phosphate aminotransferase (398 aa).

The span at 1–10 (MTGQRATPQP) shows a compositional bias: polar residues. The interval 1–30 (MTGQRATPQPTLDDLPLRDDLRGKSPYGAP) is disordered. Lys234 carries the N6-(pyridoxal phosphate)lysine modification.

This sequence belongs to the class-II pyridoxal-phosphate-dependent aminotransferase family. Histidinol-phosphate aminotransferase subfamily. Homodimer. Pyridoxal 5'-phosphate serves as cofactor.

The catalysed reaction is L-histidinol phosphate + 2-oxoglutarate = 3-(imidazol-4-yl)-2-oxopropyl phosphate + L-glutamate. It functions in the pathway amino-acid biosynthesis; L-histidine biosynthesis; L-histidine from 5-phospho-alpha-D-ribose 1-diphosphate: step 7/9. In Mycobacterium avium (strain 104), this protein is Histidinol-phosphate aminotransferase.